The sequence spans 492 residues: Stage IV sporulation protein A (492 aa).

A Walker A motif; involved in ATP-binding and hydrolysis motif is present at residues 24–31; sequence GAVRTGKS. 24-31 serves as a coordination point for ATP; that stretch reads GAVRTGKS.

As to quaternary structure, polymerizes to self-assemble into static filaments. ATP hydrolysis is required by every subunit for incorporation into the growing polymer by inducing a conformational change that drives polymerization of a nucleotide-free filament. Polymerization requires a critical concentration of the protein and only occurs after it is localized to the surface of the developing spore. Interacts (via extreme C-terminus Gly-486) with SpoVM (via Ile-6). Interacts (via full-length) with SpoVID (via C-terminus 499-575 AA). Interacts with SafA. Seems to be cleaved by the YabG protease.

The protein resides in the cytoplasm. It carries out the reaction ATP + H2O = ADP + phosphate + H(+). Its function is as follows. ATPase. Has a role at an early stage in the morphogenesis of the spore coat outer layers. Its ATP hydrolysis is required for proper assembly of the spore coat. Forms a basement layer around the outside surface of the forespore and self-assembles irreversibly into higher order structures by binding and hydrolyzing ATP thus creating a durable and stable platform upon which thereafter morphogenesis of the coat can take place. Required for proper localization of spore coat protein CotE and sporulation-specific proteins including SpoVM. The polypeptide is Stage IV sporulation protein A (spoIVA) (Bacillus subtilis (strain 168)).